Here is a 133-residue protein sequence, read N- to C-terminus: p53 and DNA damage-regulated protein 1 (133 aa).

It belongs to the prefoldin subunit beta family. In terms of assembly, component of the PAQosome complex which is responsible for the biogenesis of several protein complexes and which consists of R2TP complex members RUVBL1, RUVBL2, RPAP3 and PIH1D1, URI complex members PFDN2, PFDN6, PDRG1, UXT and URI1 as well as ASDURF, POLR2E and DNAAF10/WDR92.

Its subcellular location is the cytoplasm. In terms of biological role, may play a role in chaperone-mediated protein folding. The sequence is that of p53 and DNA damage-regulated protein 1 (Pdrg1) from Rattus norvegicus (Rat).